The chain runs to 243 residues: MNRIKAVGYENNELKEKAQLLADQLNLQLDQNADTCLFVTPEKLTLKIRNFSLMFADFSAMTWSKRRGEGKKQGLIRACKPTKGIKIFDATAGWGKDAAILATFGADVLMLERHPVMAALLADALSRRNEADIQKMCLSLIASDAISFLHSLQEKDYPDIIYIDPMHPERNKSALVKKEMQVLQQLIGTDYDAMELIKLSLSHVKSRVVVKWPQKVKPLLPPDASIDGKTVRFDIYMPQFSSN.

Residues 112-113 and Asp164 contribute to the S-adenosyl-L-methionine site; that span reads ER.

The protein belongs to the methyltransferase superfamily. RsmJ family.

The protein resides in the cytoplasm. It carries out the reaction guanosine(1516) in 16S rRNA + S-adenosyl-L-methionine = N(2)-methylguanosine(1516) in 16S rRNA + S-adenosyl-L-homocysteine + H(+). Functionally, specifically methylates the guanosine in position 1516 of 16S rRNA. The protein is Ribosomal RNA small subunit methyltransferase J of Legionella pneumophila (strain Paris).